Reading from the N-terminus, the 450-residue chain is Plasmepsin VII (450 aa).

Positions 1-24 (MNKNIIQIYLFVFILLLKQHIVIL) are cleaved as a signal peptide. Residues 92 to 441 (YYGEVQIGEQ…DKDNLKIGFV (350 aa)) enclose the Peptidase A1 domain. Catalysis depends on residues Asp111 and Asp324.

Belongs to the peptidase A1 family.

The protein resides in the cytoplasm. This Plasmodium falciparum (isolate NF54) protein is Plasmepsin VII.